Reading from the N-terminus, the 470-residue chain is Uronate isomerase (470 aa).

This sequence belongs to the metallo-dependent hydrolases superfamily. Uronate isomerase family.

It carries out the reaction D-glucuronate = D-fructuronate. The catalysed reaction is aldehydo-D-galacturonate = keto-D-tagaturonate. It functions in the pathway carbohydrate metabolism; pentose and glucuronate interconversion. This chain is Uronate isomerase, found in Salmonella agona (strain SL483).